Consider the following 27-residue polypeptide: Cupiennin-3c (27 aa).

As to expression, expressed by the venom gland.

It localises to the secreted. In Cupiennius salei (American wandering spider), this protein is Cupiennin-3c.